The sequence spans 286 residues: GTP cyclohydrolase MptA (286 aa).

It belongs to the GTP cyclohydrolase IV family. As to quaternary structure, homodimer. Requires Fe(2+) as cofactor.

It catalyses the reaction GTP + H2O = 7,8-dihydroneopterin 2',3'-cyclic phosphate + formate + diphosphate + H(+). It functions in the pathway cofactor biosynthesis; 5,6,7,8-tetrahydromethanopterin biosynthesis. Its function is as follows. Converts GTP to 7,8-dihydro-D-neopterin 2',3'-cyclic phosphate, the first intermediate in the biosynthesis of coenzyme methanopterin. The protein is GTP cyclohydrolase MptA of Thermoplasma acidophilum (strain ATCC 25905 / DSM 1728 / JCM 9062 / NBRC 15155 / AMRC-C165).